The following is a 398-amino-acid chain: Energy-coupling factor transporter ATP-binding protein EcfA2 (398 aa).

The ABC transporter domain maps to 5-240 (IELKDLEYAY…KELVRRARLK (236 aa)). Position 38–45 (38–45 (GSNGAGKS)) interacts with ATP.

This sequence belongs to the ABC transporter superfamily. Energy-coupling factor EcfA family. As to quaternary structure, forms a stable energy-coupling factor (ECF) transporter complex composed of 2 membrane-embedded substrate-binding proteins (S component), 2 ATP-binding proteins (A component) and 2 transmembrane proteins (T component).

It localises to the cell membrane. ATP-binding (A) component of a common energy-coupling factor (ECF) ABC-transporter complex. Unlike classic ABC transporters this ECF transporter provides the energy necessary to transport a number of different substrates. This chain is Energy-coupling factor transporter ATP-binding protein EcfA2, found in Methanospirillum hungatei JF-1 (strain ATCC 27890 / DSM 864 / NBRC 100397 / JF-1).